Here is a 201-residue protein sequence, read N- to C-terminus: Recombination protein RecR (201 aa).

The C4-type zinc finger occupies 57–72 (CQQCRNFTEEALCEIC). The 96-residue stretch at 81–176 (TTLCIVETPG…NISRIAHGVP (96 aa)) folds into the Toprim domain.

Belongs to the RecR family.

In terms of biological role, may play a role in DNA repair. It seems to be involved in an RecBC-independent recombinational process of DNA repair. It may act with RecF and RecO. This Colwellia psychrerythraea (strain 34H / ATCC BAA-681) (Vibrio psychroerythus) protein is Recombination protein RecR.